A 210-amino-acid chain; its full sequence is MTSQTHTLPPLPYAYDALEPVISKQIMELHHQKHHQTYINNLNAALSAQASATASNDVPTLISLQQKLRFNGGGHINHSLFWKNLTPPGTPANDIAGAPALREAIVSRWGSHEAFVKAFGAELLGLQGSGWGWLVSKGGAKGRLEIVTTKDQDPVNAPDVPVFGVDMWEHAYYLQYLNNKAGYVEGIWKIIHWAEAEKRYTAGVENPLKL.

Mn(2+)-binding residues include His-30, His-78, Asp-166, and His-170.

It belongs to the iron/manganese superoxide dismutase family. In terms of assembly, homotetramer. It depends on Mn(2+) as a cofactor. Post-translationally, the N-terminus is blocked.

It localises to the mitochondrion matrix. The enzyme catalyses 2 superoxide + 2 H(+) = H2O2 + O2. Destroys superoxide anion radicals which are normally produced within the cells and which are toxic to biological systems. In Penicillium chrysogenum (Penicillium notatum), this protein is Superoxide dismutase [Mn], mitochondrial (SOD).